The primary structure comprises 3387 residues: Genome polyprotein (3387 aa).

At 1–100 (MNQRKKVVRP…LNILNGRKRS (100 aa)) the chain is on the cytoplasmic side. Residues 36–71 (LFSGKGPLRMVLAFITFLRVLSIPPTAGILKRWGQL) form a hydrophobic; homodimerization of capsid protein C region. Positions 100–113 (STMTLLCLIPTVMA) are cleaved as a propeptide — ER anchor for the capsid protein C, removed in mature form by serine protease NS3. The helical transmembrane segment at 101–117 (TMTLLCLIPTVMAFHLS) threads the bilayer. The Extracellular segment spans residues 118-237 (TRDGEPLMIV…GAWKHAQRVE (120 aa)). An N-linked (GlcNAc...) asparagine; by host glycan is attached at Asn-182. Residues 238–258 (SWILRNPGFALLAGFMAYMIG) form a helical membrane-spanning segment. The Cytoplasmic portion of the chain corresponds to 259–265 (QTGIQRT). Residues 266–279 (VFFVLMMLVAPSYG) traverse the membrane as a helical segment. The Extracellular segment spans residues 280–723 (MRCVGVGNRD…AVHQVFGSVY (444 aa)). Cystine bridges form between Cys-282–Cys-309, Cys-339–Cys-400, Cys-353–Cys-384, and Cys-371–Cys-395. A glycan (N-linked (GlcNAc...) asparagine; by host) is linked at Asn-346. The fusion peptide stretch occupies residues 377 to 390 (DRGWGNGCGLFGKG). N-linked (GlcNAc...) asparagine; by host glycosylation occurs at Asn-432. 2 disulfide bridges follow: Cys-464-Cys-564 and Cys-581-Cys-612. A helical membrane pass occupies residues 724–744 (TTMFGGVSWMVRILIGFLVLW). The Cytoplasmic segment spans residues 745–750 (IGTNSR). The helical transmembrane segment at 751–771 (NTSMAMTCIAVGGITLFLGFT) threads the bilayer. Residues 772-1194 (VQADMGCVVS…MLGDTMSGRI (423 aa)) lie on the Extracellular side of the membrane. 6 disulfides stabilise this stretch: Cys-778/Cys-789, Cys-829/Cys-917, Cys-953/Cys-997, Cys-1054/Cys-1103, Cys-1065/Cys-1087, and Cys-1086/Cys-1090. Asn-904 and Asn-981 each carry an N-linked (GlcNAc...) asparagine; by host glycan. A helical transmembrane segment spans residues 1195–1218 (GGQVHLAIMAVFKMSPGYVLGVFL). The Lumenal segment spans residues 1219–1224 (RKLTSR). Residues 1225–1243 (ETALMVIGMAMTTVLSIPH) traverse the membrane as a helical segment. At 1244 to 1267 (DLMELIDGISLGLILLKIVTQFDN) the chain is on the cytoplasmic side. The helical transmembrane segment at 1268–1288 (TQVGTLALSLTFIRSTMPLVM) threads the bilayer. Position 1289 (Ala-1289) is a topological domain, lumenal. A helical transmembrane segment spans residues 1290–1308 (WRTIMAVLFVVTLIPLCRT). Residues 1309-1316 (SCLQKQSH) are Lumenal-facing. Residues 1317–1337 (WVEITALILGAQALPVYLMTL) form a helical membrane-spanning segment. Residues 1338–1345 (MKGASRRS) lie on the Cytoplasmic side of the membrane. Residues 1346 to 1366 (WPLNEGIMAVGLVSLLGSALL) form a helical membrane-spanning segment. The Lumenal segment spans residues 1367-1369 (KND). The helical transmembrane segment at 1370 to 1390 (VPLAGPMVAGGLLLAAYVMSG) threads the bilayer. Topologically, residues 1391–1437 (SSADLSLEKAANVQWDEMADITGSSPIIEVKQDEDGSFSIRDVEETN) are cytoplasmic. The tract at residues 1397–1436 (LEKAANVQWDEMADITGSSPIIEVKQDEDGSFSIRDVEET) is interacts with and activates NS3 protease. Residues 1438 to 1458 (MITLLVKLALITVSGLYPLAI) constitute an intramembrane region (helical). The Cytoplasmic portion of the chain corresponds to 1459–2143 (PVTMTLWYMW…QHALNELPES (685 aa)). A Peptidase S7 domain is found at 1475-1652 (SGALWDVPSP…ERIGEPDYEV (178 aa)). Active-site charge relay system; for serine protease NS3 activity residues include His-1525, Asp-1549, and Ser-1609. The 157-residue stretch at 1654–1810 (EDIFRKKRLT…QSNSPIEDIE (157 aa)) folds into the Helicase ATP-binding domain. Positions 1658 to 1661 (RKKR) are important for RNA-binding. 1667–1674 (LHPGAGKT) provides a ligand contact to ATP. The DEAH box signature appears at 1758 to 1761 (DEAH). The Helicase C-terminal domain maps to 1820-1987 (TGFDWITDYQ…IIPTLFGPER (168 aa)). Lys-1862 is modified (N6-acetyllysine; by host). A helical membrane pass occupies residues 2144–2164 (LETLMLVALLGAMTAGTFLFF). Residues 2165-2169 (MQGKG) lie on the Lumenal side of the membrane. Positions 2170-2190 (IGKLSMGLITIAVASGLLWVA) form an intramembrane region, helical. Position 2191 (Glu-2191) is a topological domain, lumenal. A helical transmembrane segment spans residues 2192-2212 (LQPQWIAASIILEFFLMVLLI). The Cytoplasmic portion of the chain corresponds to 2213–2225 (PEPEKQRTPQDNQ). The chain crosses the membrane as a helical span at residues 2226–2246 (LIYVILTILTIIGLIAANEMG). Residues 2247 to 2270 (LIEKTKTDFGFYQVKTETTILDVD) are Lumenal-facing. An intramembrane region (helical) is located at residues 2271-2291 (LRPASAWTLYAVATTILTPML). Over 2292–2301 (RHTIENTSAN) the chain is Lumenal. Residues Asn-2297 and Asn-2301 are each glycosylated (N-linked (GlcNAc...) asparagine; by host). The segment at residues 2302–2322 (LSLAAIANQAAVLMGLGKGWP) is an intramembrane region (helical). The Lumenal portion of the chain corresponds to 2323-2343 (LHRVDLGVPLLAMGCYSQVNP). Residues 2344–2364 (TTLTASLVMLLVHYAIIGPGL) form a helical membrane-spanning segment. Residues 2365 to 2409 (QAKATREAQKRTAAGIMKNPTVDGITVIDLEPISYDPKFEKQLGQ) are Cytoplasmic-facing. The helical transmembrane segment at 2410 to 2430 (VMLLVLCAGQLLLMRTTWAFC) threads the bilayer. Topologically, residues 2431–2455 (EVLTLATGPILTLWEGNPGRFWNTT) are lumenal. Asn-2453 is a glycosylation site (N-linked (GlcNAc...) asparagine; by host). The helical transmembrane segment at 2456–2476 (IAVSTANIFRGSYLAGAGLAF) threads the bilayer. At 2477-3387 (SLIKNAQTPR…SAPSESEGVL (911 aa)) the chain is on the cytoplasmic side. The mRNA cap 0-1 NS5-type MT domain maps to 2489–2751 (TGTTGETLGE…DVDLGAGTRS (263 aa)). Ser-2543 lines the S-adenosyl-L-methionine pocket. A Phosphoserine modification is found at Ser-2543. Catalysis depends on Lys-2548, which acts as the For 2'-O-MTase activity. The SUMO-interacting motif motif lies at 2564 to 2567 (VVDL). Residues Gly-2573, Trp-2574, Thr-2591, Lys-2592, Asp-2618, and Val-2619 each contribute to the S-adenosyl-L-methionine site. Catalysis depends on Asp-2633, which acts as the For 2'-O-MTase activity. Residue Ile-2634 participates in S-adenosyl-L-methionine binding. Catalysis depends on for 2'-O-MTase activity residues Lys-2668 and Glu-2704. Residue Tyr-2706 participates in S-adenosyl-L-methionine binding. The Zn(2+) site is built by Glu-2925, His-2929, Cys-2934, and Cys-2937. A RdRp catalytic domain is found at 3016–3166 (LMYADDTAGW…PLDERFSTSL (151 aa)). His-3200, Cys-3216, and Cys-3335 together coordinate Zn(2+).

This sequence in the N-terminal section; belongs to the class I-like SAM-binding methyltransferase superfamily. mRNA cap 0-1 NS5-type methyltransferase family. In terms of assembly, homodimer. Interacts (via N-terminus) with host EXOC1 (via C-terminus); this interaction results in EXOC1 degradation through the proteasome degradation pathway. Forms heterodimers with envelope protein E in the endoplasmic reticulum and Golgi. As to quaternary structure, homodimer; in the endoplasmic reticulum and Golgi. Interacts with protein prM. Interacts with non-structural protein 1. In terms of assembly, homodimer; Homohexamer when secreted. Interacts with envelope protein E. Interacts (via N-terminus) with serine protease NS3. As to quaternary structure, forms a heterodimer with serine protease NS3. May form homooligomers. In terms of assembly, forms a heterodimer with NS2B. Interacts with NS4B. Interacts with unphosphorylated RNA-directed RNA polymerase NS5; this interaction stimulates RNA-directed RNA polymerase NS5 guanylyltransferase activity. Interacts with host SHFL. Interacts with host MAVS; this interaction inhibits the synthesis of IFN-beta. Interacts with host SHFL. Interacts with host AUP1; the interaction occurs in the presence of Dengue virus NS4B and induces lipophagy which facilitates production of virus progeny particles. As to quaternary structure, interacts with serine protease NS3. In terms of assembly, homodimer. Interacts with host STAT2; this interaction inhibits the phosphorylation of the latter, and, when all viral proteins are present (polyprotein), targets STAT2 for degradation. Interacts with serine protease NS3. Interacts with host PAF1 complex; the interaction may prevent the recruitment of the PAF1 complex to interferon-responsive genes, and thus reduces the immune response. Post-translationally, specific enzymatic cleavages in vivo yield mature proteins. Cleavages in the lumen of endoplasmic reticulum are performed by host signal peptidase, whereas cleavages in the cytoplasmic side are performed by serine protease NS3. Signal cleavage at the 2K-4B site requires a prior NS3 protease-mediated cleavage at the 4A-2K site. In terms of processing, cleaved in post-Golgi vesicles by a host furin, releasing the mature small envelope protein M, and peptide pr. This cleavage is incomplete as up to 30% of viral particles still carry uncleaved prM. N-glycosylated. Post-translationally, N-glycosylated. The excreted form is glycosylated and this is required for efficient secretion of the protein from infected cells. In terms of processing, acetylated by host KAT5. Acetylation modulates NS3 RNA-binding and unwinding activities and plays an important positive role for viral replication. Sumoylation of RNA-directed RNA polymerase NS5 increases NS5 protein stability allowing proper viral RNA replication. Post-translationally, phosphorylated on serines residues. This phosphorylation may trigger NS5 nuclear localization.

Its subcellular location is the virion. The protein resides in the host nucleus. The protein localises to the host cytoplasm. It localises to the host perinuclear region. It is found in the secreted. Its subcellular location is the virion membrane. The protein resides in the host endoplasmic reticulum membrane. The protein localises to the host mitochondrion. The catalysed reaction is Selective hydrolysis of -Xaa-Xaa-|-Yaa- bonds in which each of the Xaa can be either Arg or Lys and Yaa can be either Ser or Ala.. The enzyme catalyses RNA(n) + a ribonucleoside 5'-triphosphate = RNA(n+1) + diphosphate. It carries out the reaction a ribonucleoside 5'-triphosphate + H2O = a ribonucleoside 5'-diphosphate + phosphate + H(+). It catalyses the reaction ATP + H2O = ADP + phosphate + H(+). The catalysed reaction is a 5'-end (5'-triphosphoguanosine)-ribonucleoside in mRNA + S-adenosyl-L-methionine = a 5'-end (N(7)-methyl 5'-triphosphoguanosine)-ribonucleoside in mRNA + S-adenosyl-L-homocysteine. The enzyme catalyses a 5'-end (N(7)-methyl 5'-triphosphoguanosine)-ribonucleoside in mRNA + S-adenosyl-L-methionine = a 5'-end (N(7)-methyl 5'-triphosphoguanosine)-(2'-O-methyl-ribonucleoside) in mRNA + S-adenosyl-L-homocysteine + H(+). In terms of biological role, plays a role in virus budding by binding to the cell membrane and gathering the viral RNA into a nucleocapsid that forms the core of a mature virus particle. During virus entry, may induce genome penetration into the host cytoplasm after hemifusion induced by the surface proteins. Can migrate to the cell nucleus where it modulates host functions. Overcomes the anti-viral effects of host EXOC1 by sequestering and degrading the latter through the proteasome degradation pathway. Functionally, inhibits RNA silencing by interfering with host Dicer. Its function is as follows. Prevents premature fusion activity of envelope proteins in trans-Golgi by binding to envelope protein E at pH6.0. After virion release in extracellular space, gets dissociated from E dimers. Acts as a chaperone for envelope protein E during intracellular virion assembly by masking and inactivating envelope protein E fusion peptide. prM is the only viral peptide matured by host furin in the trans-Golgi network probably to avoid catastrophic activation of the viral fusion activity in acidic Golgi compartment prior to virion release. prM-E cleavage is inefficient, and many virions are only partially matured. These uncleaved prM would play a role in immune evasion. In terms of biological role, may play a role in virus budding. Exerts cytotoxic effects by activating a mitochondrial apoptotic pathway through M ectodomain. May display a viroporin activity. Functionally, binds to host cell surface receptor and mediates fusion between viral and cellular membranes. Envelope protein is synthesized in the endoplasmic reticulum in the form of heterodimer with protein prM. They play a role in virion budding in the ER, and the newly formed immature particle is covered with 60 spikes composed of heterodimer between precursor prM and envelope protein E. The virion is transported to the Golgi apparatus where the low pH causes dissociation of PrM-E heterodimers and formation of E homodimers. prM-E cleavage is inefficient, and many virions are only partially matured. These uncleaved prM would play a role in immune evasion. Its function is as follows. Involved in immune evasion, pathogenesis and viral replication. Once cleaved off the polyprotein, is targeted to three destinations: the viral replication cycle, the plasma membrane and the extracellular compartment. Essential for viral replication. Required for formation of the replication complex and recruitment of other non-structural proteins to the ER-derived membrane structures. Excreted as a hexameric lipoparticle that plays a role against host immune response. Antagonizing the complement function. Binds to the host macrophages and dendritic cells. Inhibits signal transduction originating from Toll-like receptor 3 (TLR3). Disrupts the host endothelial glycocalyx layer of host pulmonary microvascular endothelial cells, inducing degradation of sialic acid and shedding of heparan sulfate proteoglycans. NS1 induces expression of sialidases, heparanase, and activates cathepsin L, which activates heparanase via enzymatic cleavage. These effects are probably linked to the endothelial hyperpermeability observed in severe dengue disease. In terms of biological role, component of the viral RNA replication complex that functions in virion assembly and antagonizes the host immune response. Functionally, required cofactor for the serine protease function of NS3. May have membrane-destabilizing activity and form viroporins. Its function is as follows. Displays three enzymatic activities: serine protease, NTPase and RNA helicase. NS3 serine protease, in association with NS2B, performs its autocleavage and cleaves the polyprotein at dibasic sites in the cytoplasm: C-prM, NS2A-NS2B, NS2B-NS3, NS3-NS4A, NS4A-2K and NS4B-NS5. NS3 RNA helicase binds RNA and unwinds dsRNA in the 3' to 5' direction. Regulates the ATPase activity of the NS3 helicase activity. NS4A allows NS3 helicase to conserve energy during unwinding. Plays a role in the inhibition of the host innate immune response. Interacts with host MAVS and thereby prevents the interaction between RIGI and MAVS. In turn, IFN-beta production is impaired. Interacts with host AUP1 which mediates induction of lipophagy in host cells and facilitates production of virus progeny particles. In terms of biological role, functions as a signal peptide for NS4B and is required for the interferon antagonism activity of the latter. Functionally, induces the formation of ER-derived membrane vesicles where the viral replication takes place. Inhibits interferon (IFN)-induced host STAT1 phosphorylation and nuclear translocation, thereby preventing the establishment of cellular antiviral state by blocking the IFN-alpha/beta pathway. Its function is as follows. Replicates the viral (+) and (-) RNA genome, and performs the capping of genomes in the cytoplasm. NS5 methylates viral RNA cap at guanine N-7 and ribose 2'-O positions. Besides its role in RNA genome replication, also prevents the establishment of cellular antiviral state by blocking the interferon-alpha/beta (IFN-alpha/beta) signaling pathway. Inhibits host TYK2 and STAT2 phosphorylation, thereby preventing activation of JAK-STAT signaling pathway. May reduce immune responses by preventing the recruitment of the host PAF1 complex to interferon-responsive genes. The protein is Genome polyprotein of Dengue virus type 4 (strain Singapore/8976/1995) (DENV-4).